The chain runs to 375 residues: G-protein coupled estrogen receptor 1 (375 aa).

Met1 is subject to N-acetylmethionine. At 1 to 62 (MDVTSQARGV…QQYVIGLFLS (62 aa)) the chain is on the extracellular side. Asn25, Asn32, and Asn44 each carry an N-linked (GlcNAc...) asparagine glycan. Residues 63–84 (CLYTIFLFPIGFVGNILILVVN) form a helical membrane-spanning segment. Residues 85 to 96 (ISFREKMTIPDL) lie on the Cytoplasmic side of the membrane. Residues 97 to 120 (YFINLAVADLILVADSLIEVFNLH) form a helical membrane-spanning segment. The Extracellular portion of the chain corresponds to 121 to 132 (ERYYDIAVLCTF). Cys130 and Cys207 are joined by a disulfide. A helical membrane pass occupies residues 133-153 (MSLFLQVNMYSSVFFLTWMSF). The Cytoplasmic portion of the chain corresponds to 154 to 175 (DRYIALARAMRCSLFRTKHHAR). The chain crosses the membrane as a helical span at residues 176–194 (LSCGLIWMASVSATLVPFT). The Extracellular portion of the chain corresponds to 195-220 (AVHLQHTDEACFCFADVREVQWLEVT). The helical transmembrane segment at 221–236 (LGFIVPFAIIGLCYSL) threads the bilayer. Over 237–259 (IVRVLVRAHRHRGLRPRRQKALR) the chain is Cytoplasmic. Residues 260–280 (MILAVVLVFFVCWLPENVFIS) form a helical membrane-spanning segment. Over 281–306 (VHLLQRTQPGAAPCKQSFRHAHPLTG) the chain is Extracellular. The helical transmembrane segment at 307–327 (HIVNLAAFSNSCLNPLIYSFL) threads the bilayer. Residues 328 to 375 (GETFRDKLRLYIEQKTNLPALNRFCHAALKAVIPDSTEQSDVRFSSAV) are Cytoplasmic-facing.

The protein belongs to the G-protein coupled receptor 1 family. In terms of assembly, homodimer. Heterodimer; heterodimerizes with other G-protein-coupled receptor (GPCRs) like CRHR1, HTR1A and PAQR8. Interacts (via C-terminus tail motif) with DLG4 (via N-terminus tandem pair of PDZ domains); the interaction is direct and induces the increase of GPER1 protein levels residing at the plasma membrane surface in a estradiol-independent manner. Interacts with RAMP3; the interaction confers proper subcellular localization and function in cardioprotection. Interacts with KRT7 and KRT8. Interacts with EGFR; the interaction increases after agonist-induced stimulation in cancer-associated fibroblasts (CAF). Interacts with EGFR and ESR1. Ubiquitinated; ubiquitination occurs at the plasma membrane and leads to proteasome-mediated degradation. In terms of processing, glycosylated. As to expression, expressed in placenta, endothelial and epithelial cells, non laboring and laboring term myometrium, fibroblasts and cancer-associated fibroblasts (CAF), prostate cancer cells and invasive adenocarcinoma (at protein level). Ubiquitously expressed, but is most abundant in placenta. In brain regions, expressed as a 2.8 kb transcript in basal forebrain, frontal cortex, thalamus, hippocampus, caudate and putamen.

It is found in the nucleus. The protein localises to the cytoplasm. Its subcellular location is the perinuclear region. The protein resides in the cytoskeleton. It localises to the cell membrane. It is found in the basolateral cell membrane. The protein localises to the cytoplasmic vesicle membrane. Its subcellular location is the early endosome. The protein resides in the recycling endosome. It localises to the golgi apparatus membrane. It is found in the golgi apparatus. The protein localises to the trans-Golgi network. Its subcellular location is the endoplasmic reticulum membrane. The protein resides in the cell projection. It localises to the dendrite. It is found in the dendritic spine membrane. The protein localises to the axon. Its subcellular location is the postsynaptic density. The protein resides in the mitochondrion membrane. Functionally, G-protein coupled estrogen receptor that binds to 17-beta-estradiol (E2) with high affinity, leading to rapid and transient activation of numerous intracellular signaling pathways. Stimulates cAMP production, calcium mobilization and tyrosine kinase Src inducing the release of heparin-bound epidermal growth factor (HB-EGF) and subsequent transactivation of the epidermal growth factor receptor (EGFR), activating downstream signaling pathways such as PI3K/Akt and ERK/MAPK. Mediates pleiotropic functions among others in the cardiovascular, endocrine, reproductive, immune and central nervous systems. Has a role in cardioprotection by reducing cardiac hypertrophy and perivascular fibrosis in a RAMP3-dependent manner. Regulates arterial blood pressure by stimulating vasodilation and reducing vascular smooth muscle and microvascular endothelial cell proliferation. Plays a role in blood glucose homeostasis contributing to the insulin secretion response by pancreatic beta cells. Triggers mitochondrial apoptosis during pachytene spermatocyte differentiation. Stimulates uterine epithelial cell proliferation. Enhances uterine contractility in response to oxytocin. Contributes to thymic atrophy by inducing apoptosis. Attenuates TNF-mediated endothelial expression of leukocyte adhesion molecules. Promotes neuritogenesis in developing hippocampal neurons. Plays a role in acute neuroprotection against NMDA-induced excitotoxic neuronal death. Increases firing activity and intracellular calcium oscillations in luteinizing hormone-releasing hormone (LHRH) neurons. Inhibits early osteoblast proliferation at growth plate during skeletal development. Inhibits mature adipocyte differentiation and lipid accumulation. Involved in the recruitment of beta-arrestin 2 ARRB2 at the plasma membrane in epithelial cells. Also functions as a receptor for aldosterone mediating rapid regulation of vascular contractibility through the PI3K/ERK signaling pathway. Involved in cancer progression regulation. Stimulates cancer-associated fibroblast (CAF) proliferation by a rapid genomic response through the EGFR/ERK transduction pathway. Associated with EGFR, may act as a transcription factor activating growth regulatory genes (c-fos, cyclin D1). Promotes integrin alpha-5/beta-1 and fibronectin (FN) matrix assembly in breast cancer cells. The chain is G-protein coupled estrogen receptor 1 from Homo sapiens (Human).